A 295-amino-acid chain; its full sequence is Pyridoxal 5'-phosphate synthase subunit PdxS (295 aa).

Aspartate 25 provides a ligand contact to D-ribose 5-phosphate. The active-site Schiff-base intermediate with D-ribose 5-phosphate is lysine 82. Residue glycine 154 coordinates D-ribose 5-phosphate. Arginine 166 serves as a coordination point for D-glyceraldehyde 3-phosphate. Residues glycine 215 and 236–237 (GS) each bind D-ribose 5-phosphate.

This sequence belongs to the PdxS/SNZ family. In the presence of PdxT, forms a dodecamer of heterodimers.

It catalyses the reaction aldehydo-D-ribose 5-phosphate + D-glyceraldehyde 3-phosphate + L-glutamine = pyridoxal 5'-phosphate + L-glutamate + phosphate + 3 H2O + H(+). It participates in cofactor biosynthesis; pyridoxal 5'-phosphate biosynthesis. Catalyzes the formation of pyridoxal 5'-phosphate from ribose 5-phosphate (RBP), glyceraldehyde 3-phosphate (G3P) and ammonia. The ammonia is provided by the PdxT subunit. Can also use ribulose 5-phosphate and dihydroxyacetone phosphate as substrates, resulting from enzyme-catalyzed isomerization of RBP and G3P, respectively. The protein is Pyridoxal 5'-phosphate synthase subunit PdxS of Listeria innocua serovar 6a (strain ATCC BAA-680 / CLIP 11262).